A 342-amino-acid chain; its full sequence is MKFWRERERENKEQILAPLCGQVRVLVVGDSGVGKTSLVHLINKGSSIVRPPQTIGCTVGVKHITYGSPASSSSSIQGDSERDFFVELWDVSGHERYKDCRSLFYSQINGVIFVHDLSQRRTKTSLQKWASEVAATGTFSAPLPSGGPGGLPVPYIVVGNKADIAAKEGTKGSSGNLVDAARHWVEKQGLLPSSSEDLPLFESFPGNGGLIAAAKETRYDKEALNKFFRMLIRRRYFSDELPAASPWSISPVPTSSSQRLDEITSDDDQFYKRTSFHGDPYKYNNTIPPLPAQRNLTPPPTLYPQQPVSTPDNYTIPRYSLSSVQETTNNGSARSKRMDINV.

Positions 12–285 (KEQILAPLCG…FHGDPYKYNN (274 aa)) are small GTPase-like. Residues 29–36 (GDSGVGKT), 90–94 (DVSGH), and 160–163 (NKAD) contribute to the GTP site. Disordered regions lie at residues 274–313 (TSFH…TPDN) and 323–342 (SVQE…DINV). Positions 323–333 (SVQETTNNGSA) are enriched in polar residues.

This sequence belongs to the small GTPase superfamily.

Its subcellular location is the nucleus. It localises to the cytoplasm. Functional small GTPase that acts as a negative factor controlling the light-dependent period shortening of circadian rhythms and light-induced phase resetting during the subjective night. May protect the clock from excessive or mistimed light. Suppresses red and blue light-mediated photomorphogenesis and is required for light-controlled inhibition of endoreplication and tolerance to salt stress. The entrainment of the circadian clock is independent from the other pleiotropic effects. Could be a regulator of seedling establishment. This chain is Small GTPase LIP1, found in Arabidopsis thaliana (Mouse-ear cress).